Reading from the N-terminus, the 481-residue chain is uncharacterized protein (481 aa).

The next 11 membrane-spanning stretches (helical) occupy residues L14–L34, F46–A66, I90–A110, F134–F154, T167–T187, F218–I238, I258–G278, I303–A323, L377–A397, A411–S431, and Y446–H466.

Belongs to the amino acid-polyamine-organocation (APC) superfamily.

It localises to the cell membrane. Its function is as follows. Probable amino-acid or metabolite transport protein. This is an uncharacterized protein from Mycobacterium bovis (strain ATCC BAA-935 / AF2122/97).